Here is a 354-residue protein sequence, read N- to C-terminus: MEISGFMKHPWIGRRVLKTGLAVCLTTAICMAFNLSPTFAVISAIVTTEPTAADSLKKGLIRLPAAALGAFFAVLSAYFFGQTPITYAIVSMITIAVCARLRLDAGTLVATLTAVAMIPSTTDHLFADYVSRVAGTSLGIMISTFVNFMILPPKFGPILMNKVEKMFAMLSSELKLVTTKVVDFEKEETMTSYRTLHHHLSETYKLTTFQHDEWKYRKSSSSEKRSFTYLHRKLDYVYKALAHLGKIGQIRLKKPLSVKERQLVLSFLVSLTNILQDPLHQIHTEHYALARQLEDAMHKKKDATEPIHRLLSELISLHDLTVELEQCTADERRFSLEERAYPSYIFLERLRPSD.

A run of 4 helical transmembrane segments spans residues 22 to 42 (AVCL…FAVI), 60 to 80 (LIRL…AYFF), 107 to 127 (TLVA…HLFA), and 133 to 153 (VAGT…ILPP).

This sequence belongs to the UPF0421 family.

It is found in the cell membrane. The sequence is that of UPF0421 protein BH2644 from Halalkalibacterium halodurans (strain ATCC BAA-125 / DSM 18197 / FERM 7344 / JCM 9153 / C-125) (Bacillus halodurans).